The primary structure comprises 696 residues: DNA-directed RNA polymerase subunit beta' (696 aa).

The Zn(2+) site is built by Cys70, Cys72, Cys85, and Cys88. Positions 540, 542, and 544 each coordinate Mg(2+).

Belongs to the RNA polymerase beta' chain family. RpoC1 subfamily. In terms of assembly, in plastids the minimal PEP RNA polymerase catalytic core is composed of four subunits: alpha, beta, beta', and beta''. When a (nuclear-encoded) sigma factor is associated with the core the holoenzyme is formed, which can initiate transcription. It depends on Mg(2+) as a cofactor. Zn(2+) serves as cofactor.

The protein resides in the plastid. Its subcellular location is the chloroplast. The catalysed reaction is RNA(n) + a ribonucleoside 5'-triphosphate = RNA(n+1) + diphosphate. Functionally, DNA-dependent RNA polymerase catalyzes the transcription of DNA into RNA using the four ribonucleoside triphosphates as substrates. The sequence is that of DNA-directed RNA polymerase subunit beta' from Phaeodactylum tricornutum (strain CCAP 1055/1).